Consider the following 1097-residue polypeptide: Protease Do-like 7 (1097 aa).

Residues Val-55–Leu-243 form a serine protease region. The PDZ domain maps to Met-269–Val-366. The Charge relay system role is filled by His-524. The segment covering Thr-546–Phe-556 has biased composition (polar residues). Residues Thr-546–Gly-577 are disordered. Over residues Ser-558–Glu-567 the composition is skewed to basic and acidic residues. Residue Ser-785 is the Charge relay system of the active site.

This sequence belongs to the peptidase S1C family.

It localises to the cytoplasm. Probable serine protease. The polypeptide is Protease Do-like 7 (DEGP7) (Arabidopsis thaliana (Mouse-ear cress)).